Here is a 213-residue protein sequence, read N- to C-terminus: MVQSCSAYGCKNRYDKDKPVSFHKFPLTRPSLCKKWEAAVRRKNFKPTKYSSICSEHFTPDCFKRECNNKLLKEDAVPTIFLCTEPHDKKEDLLEPQEQPPPPPLTPPISQVDAAIGLLMPPLQTPDNLSVFCDHNYTVEDTMHQRKRIHQLEQQVEKLRKKLKTAQQRCRRQERQLEKLKEVVHFQKEKDGASERGYVILPNDYFEIVEVPA.

The segment at 5–57 (CSAYGCKNRYDKDKPVSFHKFPLTRPSLCKKWEAAVRRKNFKPTKYSSICSEH) adopts a THAP-type zinc-finger fold. The HCFC1-binding motif (HBM) motif lies at 134–137 (DHNY). A coiled-coil region spans residues 139-190 (VEDTMHQRKRIHQLEQQVEKLRKKLKTAQQRCRRQERQLEKLKEVVHFQKEK).

It belongs to the THAP1 family. Interacts with PAWR. Component of a THAP1/THAP3-HCFC1-OGT complex that contains, either THAP1 or THAP3, HCFC1 and OGT. Interacts with OGT. Interacts (via the HBM) with HCFC1 (via the Kelch-repeat domain); the interaction recruits HCFC1 to the RRM1 promoter.

Its subcellular location is the nucleus. It is found in the nucleoplasm. The protein resides in the PML body. In terms of biological role, DNA-binding transcription regulator that regulates endothelial cell proliferation and G1/S cell-cycle progression. Specifically binds the 5'-[AT]NTNN[GT]GGCA[AGT]-3' core DNA sequence and acts by modulating expression of pRB-E2F cell-cycle target genes, including RRM1. May also have pro-apoptotic activity by potentiating both serum-withdrawal and TNF-induced apoptosis. The protein is THAP domain-containing protein 1 (THAP1) of Bos taurus (Bovine).